The sequence spans 226 residues: MTWMIRDVPKDSRPRERLLASGPESLSDHELLAILLRTGTKDESVVQLAQRVLQHFEGLRLLKDATVEEMTSIKGIGPTKAVQILAALELGRRIHQSGYNDRYVIRCPEDGAKYVMEDMRFLSQEHFVAIYLNTKNQVIHRKTVFIGSLNASIVHPREVFKEAIKRSAASVICVHNHPSGDPTPSREDIDVTKRLAECGRIIGIELLDHLIIGDQKFISLKEKGYV.

One can recognise an MPN domain in the interval 104-226 (VIRCPEDGAK…FISLKEKGYV (123 aa)). 3 residues coordinate Zn(2+): histidine 175, histidine 177, and aspartate 188. The JAMM motif motif lies at 175–188 (HNHPSGDPTPSRED).

Belongs to the UPF0758 family.

The protein is UPF0758 protein GTNG_2548 of Geobacillus thermodenitrificans (strain NG80-2).